The primary structure comprises 441 residues: MQPPPSLCGLALLALVLACGMAEVWGEEREMPSAPATPPLLGASEILTPSTKTSWPRDSNASLPRSSAPAEIPKEGRTAGAPRRTPPPCQRPTEIKDTFKYINTVVSCLVFVLGIIGNSTLLRIIYKNKCMRNGPNILIASLALGDLLHIIIDIPINVYKLLAEDWPFGAEMCKLVPFIQKASVGITVLSLCALSIDRYRAVASWSRIKGIGVPKWTAVEIVLIWVVSVILAVPEAIGFNLVTIDYKGSYLRICLLNPTQKTAFMQFYKTAKDWWLFSFYFCLPLAITAFFYTLMTCEMLRKKSGMQIALNDHLKQRREVAKTVFCLVLVFGLCWLALHLSRILKLTLYDQNDPNRCELLSFLLVLDYIGINMASLNSCINPIALYLVSKRFKNCFKSCLCCWCQSFEEKQSLEEKQSCLKFKANDHGYDNFRSSNKYSSS.

An N-terminal signal peptide occupies residues 1–26 (MQPPPSLCGLALLALVLACGMAEVWG). The Extracellular portion of the chain corresponds to 27 to 100 (EEREMPSAPA…RPTEIKDTFK (74 aa)). Residues 30–90 (EMPSAPATPP…APRRTPPPCQ (61 aa)) are disordered. The segment covering 47–65 (LTPSTKTSWPRDSNASLPR) has biased composition (polar residues). N-linked (GlcNAc...) asparagine glycosylation is present at asparagine 60. The helical transmembrane segment at 101-125 (YINTVVSCLVFVLGIIGNSTLLRII) threads the bilayer. The Cytoplasmic segment spans residues 126 to 136 (YKNKCMRNGPN). Residues 137–162 (ILIASLALGDLLHIIIDIPINVYKLL) traverse the membrane as a helical segment. Topologically, residues 163–174 (AEDWPFGAEMCK) are extracellular. The cysteines at positions 173 and 254 are disulfide-linked. The helical transmembrane segment at 175–196 (LVPFIQKASVGITVLSLCALSI) threads the bilayer. Topologically, residues 197 to 217 (DRYRAVASWSRIKGIGVPKWT) are cytoplasmic. Residues 218–242 (AVEIVLIWVVSVILAVPEAIGFNLV) form a helical membrane-spanning segment. Over 243–270 (TIDYKGSYLRICLLNPTQKTAFMQFYKT) the chain is Extracellular. A helical membrane pass occupies residues 271–295 (AKDWWLFSFYFCLPLAITAFFYTLM). Residues 296–323 (TCEMLRKKSGMQIALNDHLKQRREVAKT) lie on the Cytoplasmic side of the membrane. The residue at position 304 (serine 304) is a Phosphoserine. The chain crosses the membrane as a helical span at residues 324-349 (VFCLVLVFGLCWLALHLSRILKLTLY). At 350-361 (DQNDPNRCELLS) the chain is on the extracellular side. A helical membrane pass occupies residues 362-388 (FLLVLDYIGINMASLNSCINPIALYLV). Residues 389–441 (SKRFKNCFKSCLCCWCQSFEEKQSLEEKQSCLKFKANDHGYDNFRSSNKYSSS) are Cytoplasmic-facing. Residues cysteine 402 and cysteine 404 are each lipidated (S-palmitoyl cysteine). Serine 418 is modified (phosphoserine). At tyrosine 438 the chain carries Phosphotyrosine. Phosphoserine is present on residues serine 439, serine 440, and serine 441.

It belongs to the G-protein coupled receptor 1 family. Endothelin receptor subfamily. EDNRB sub-subfamily.

The protein resides in the cell membrane. Its function is as follows. Non-specific receptor for endothelin 1, 2, and 3. Mediates its action by association with G proteins that activate a phosphatidylinositol-calcium second messenger system. This chain is Endothelin receptor type B (EDNRB), found in Oryctolagus cuniculus (Rabbit).